A 1307-amino-acid polypeptide reads, in one-letter code: Cellulose synthase 2 operon protein C (1307 aa).

An N-terminal signal peptide occupies residues 1-55; it reads MTRPRGPAPRDGAAWRRDPARRVLLRDAVRGREGGLRLACAVMAGLIVSGGVACA. TPR repeat units follow at residues 97–130, 270–303, 339–372, 374–406, 458–491, 493–525, 528–561, 754–787, and 788–821; these read LELL…EPDN, LDGL…EPIT, AAND…DPHD, DALG…GPDA, LTVL…APRD, GALF…APAM, RLEA…DPDD, IGLA…HPDS, and VEAH…KPAN.

Belongs to the AcsC/BcsC family.

It is found in the cell outer membrane. Its pathway is glycan metabolism; bacterial cellulose biosynthesis. In terms of biological role, required for maximal bacterial cellulose synthesis. The sequence is that of Cellulose synthase 2 operon protein C (bcsCII) from Komagataeibacter xylinus (Gluconacetobacter xylinus).